A 102-amino-acid chain; its full sequence is Large ribosomal subunit protein uL24 (102 aa).

The disordered stretch occupies residues 1-22; it reads MHVKKGDTVQVMSGKDKGKQGV.

Belongs to the universal ribosomal protein uL24 family. In terms of assembly, part of the 50S ribosomal subunit.

Functionally, one of two assembly initiator proteins, it binds directly to the 5'-end of the 23S rRNA, where it nucleates assembly of the 50S subunit. One of the proteins that surrounds the polypeptide exit tunnel on the outside of the subunit. In Exiguobacterium sp. (strain ATCC BAA-1283 / AT1b), this protein is Large ribosomal subunit protein uL24.